We begin with the raw amino-acid sequence, 109 residues long: Synaptobrevin-1 (109 aa).

The tract at residues methionine 1–glutamine 26 is disordered. Over methionine 1–lysine 86 the chain is Cytoplasmic. A v-SNARE coiled-coil homology domain is found at arginine 23 to lysine 83. A helical; Anchor for type IV membrane protein membrane pass occupies residues methionine 87–glycine 107. Topologically, residues glycine 108–lysine 109 are extracellular.

The protein belongs to the synaptobrevin family. Part of the SNARE core complex containing ric-4/SNAP25, snb-1/VAMP2 and unc-64/STX1A. This complex binds to cpx-1/CPLX1. Expressed in the nervous system notably the nerve ring, ventral cord and dorsal cord.

It is found in the cytoplasmic vesicle. The protein resides in the secretory vesicle. It localises to the synaptic vesicle membrane. Its subcellular location is the cell membrane. The protein localises to the synapse. It is found in the synaptosome. Functionally, involved in the targeting and/or fusion of transport vesicles to their target membrane. Acts in neuronal exocytosis of synaptic transmission. Likely to have a role in cholinergic transmisson. Required for viability, coordinated movement and M3 pharynx motor neuron function. This is Synaptobrevin-1 from Caenorhabditis elegans.